A 954-amino-acid polypeptide reads, in one-letter code: Glucosidase 2 subunit alpha (954 aa).

The N-terminal stretch at 1–22 (MVLLKWLVCQLVFFTAFSHAFT) is a signal peptide. N-linked (GlcNAc...) asparagine glycans are attached at residues Asn-114, Asn-126, Asn-142, Asn-173, and Asn-345. Asp-537 serves as the catalytic Nucleophile. The active site involves Glu-540. Residue Asp-614 is the Proton donor of the active site. N-linked (GlcNAc...) asparagine glycans are attached at residues Asn-783, Asn-791, Asn-867, Asn-880, Asn-907, and Asn-941.

The protein belongs to the glycosyl hydrolase 31 family. As to quaternary structure, heterodimer of a catalytic subunit alpha (ROT2) and a subunit beta (GTB1).

The protein resides in the endoplasmic reticulum. The catalysed reaction is N(4)-(alpha-D-Glc-(1-&gt;3)-alpha-D-Man-(1-&gt;2)-alpha-D-Man-(1-&gt;2)-alpha-D-Man-(1-&gt;3)-[alpha-D-Man-(1-&gt;2)-alpha-D-Man-(1-&gt;3)-[alpha-D-Man-(1-&gt;2)-alpha-D-Man-(1-&gt;6)]-alpha-D-Man-(1-&gt;6)]-beta-D-Man-(1-&gt;4)-beta-D-GlcNAc-(1-&gt;4)-beta-D-GlcNAc)-L-asparaginyl-[protein] + H2O = N(4)-(alpha-D-Man-(1-&gt;2)-alpha-D-Man-(1-&gt;2)-alpha-D-Man-(1-&gt;3)-[alpha-D-Man-(1-&gt;2)-alpha-D-Man-(1-&gt;3)-[alpha-D-Man-(1-&gt;2)-alpha-D-Man-(1-&gt;6)]-alpha-D-Man-(1-&gt;6)]-beta-D-Man-(1-&gt;4)-beta-D-GlcNAc-(1-&gt;4)-beta-D-GlcNAc)-L-asparaginyl-[protein] (N-glucan mannose isomer 9A1,2,3B1,2,3) + beta-D-glucose. It carries out the reaction N(4)-(alpha-D-Glc-(1-&gt;3)-alpha-D-Glc-(1-&gt;3)-alpha-D-Man-(1-&gt;2)-alpha-D-Man-(1-&gt;2)-alpha-D-Man-(1-&gt;3)-[alpha-D-Man-(1-&gt;2)-alpha-D-Man-(1-&gt;3)-[alpha-D-Man-(1-&gt;2)-alpha-D-Man-(1-&gt;6)]-alpha-D-Man-(1-&gt;6)]-beta-D-Man-(1-&gt;4)-beta-D-GlcNAc-(1-&gt;4)-beta-D-GlcNAc)-L-asparaginyl-[protein] + H2O = N(4)-(alpha-D-Glc-(1-&gt;3)-alpha-D-Man-(1-&gt;2)-alpha-D-Man-(1-&gt;2)-alpha-D-Man-(1-&gt;3)-[alpha-D-Man-(1-&gt;2)-alpha-D-Man-(1-&gt;3)-[alpha-D-Man-(1-&gt;2)-alpha-D-Man-(1-&gt;6)]-alpha-D-Man-(1-&gt;6)]-beta-D-Man-(1-&gt;4)-beta-D-GlcNAc-(1-&gt;4)-beta-D-GlcNAc)-L-asparaginyl-[protein] + beta-D-glucose. It participates in glycan metabolism; N-glycan metabolism. Its activity is regulated as follows. Inhibited by glucose, maltose and nigerose, and by the antibiotic deoxynojirimycin. Functionally, catalytic subunit of glucosidase 2, which cleaves sequentially the 2 innermost alpha-1,3-linked glucose residues from the Glc(2)Man(9)GlcNAc(2) oligosaccharide precursor of immature glycoproteins. The sequence is that of Glucosidase 2 subunit alpha (ROT2) from Saccharomyces cerevisiae (strain ATCC 204508 / S288c) (Baker's yeast).